The sequence spans 1342 residues: DNA-directed RNA polymerase subunit beta (1342 aa).

The protein belongs to the RNA polymerase beta chain family. The RNAP catalytic core consists of 2 alpha, 1 beta, 1 beta' and 1 omega subunit. When a sigma factor is associated with the core the holoenzyme is formed, which can initiate transcription.

The catalysed reaction is RNA(n) + a ribonucleoside 5'-triphosphate = RNA(n+1) + diphosphate. Its function is as follows. DNA-dependent RNA polymerase catalyzes the transcription of DNA into RNA using the four ribonucleoside triphosphates as substrates. The protein is DNA-directed RNA polymerase subunit beta of Aeromonas hydrophila subsp. hydrophila (strain ATCC 7966 / DSM 30187 / BCRC 13018 / CCUG 14551 / JCM 1027 / KCTC 2358 / NCIMB 9240 / NCTC 8049).